The chain runs to 936 residues: MSLEEKEMKYRISDIARELQVSPQEVLHFVKQEGAKVASTSSMVKSDMRELILGHFSDEKRLVDQTRKIREEKRQRLTRLEEQSRKTYEKEQQLKDSIAVFPEPGPVLKKDHVHEEPEKPAIVISESEPEVEPEVEPEQPAAAQEAEEAVPTEAVSVPEPVEQERVVPAPEKPEAEKPVPEQSSTMKAQASPEMQVTYEKPKNIGGLTVLGSIDVRSALDRGSESDRKKKNRKKRFKEQADELKGEFENAGKAEGDKKPAKSGEAKTKAPKKAAGTTGSAAEDTTSSKKKKGGKKKKPAVDEKVISQNIRSTISGMDDSSGGSGSRQKFRKMRKIEREKELEAAEAVKEAERSIVRVTEFATAHELADLMGITAKEIIQRCFTLGKFVTINQRLDKETIELVALEFGFEAEFVSEVEATEVFEVHDDSEDLEIRPPVVTIMGHVDHGKTSLLDYIRSSNVVAGESGGITQHIGAYEVTLDNGRSITFLDTPGHEAFTAMRARGAQVTDIVILVVAADDSVMPQTIEAINHSKAANVPIVVAINKIDKPEANPEKIRAQLSEAGVLVEDWGGEYQCQEISAKQGMGMHELMEKVLMEAEIRELKANFSREANSRGIIVESELDKGKGVISTVLVQRGFLKVGDPFVAGNTMGRVRALMDERGRRIKEAGPSQPVRVLGFEDLPQSGDEFVVMPTDKEAREIAQKRQIIRREHEFRRSTRVKLDSIARQIKEGLMKELSVIIKADTDGSIQALADGLMKIHNEEVKVQIIHQGVGQITETDVLLAAASDAIIIGFRVRPNVNAKRLAEKEDLDVRFYSVIYHVIEEIEQALEGMLSPELHEESLGSLEIRQVFRVPKIGNVGGCYMLEGKIFRDSKVRLLREGVQIYDGVLDSLKRFKDDVKEVDAGYECGLNLKGYGDIKVGDIVEAYRIVEKKRKL.

The disordered stretch occupies residues 102–332 (PEPGPVLKKD…SGSRQKFRKM (231 aa)). Over residues 108–119 (LKKDHVHEEPEK) the composition is skewed to basic and acidic residues. Residues 127-137 (SEPEVEPEVEP) show a composition bias toward acidic residues. A compositionally biased stretch (low complexity) spans 151–160 (PTEAVSVPEP). Over residues 182-194 (QSSTMKAQASPEM) the composition is skewed to polar residues. Basic and acidic residues-rich tracts occupy residues 217 to 227 (SALDRGSESDR) and 237 to 267 (KEQADELKGEFENAGKAEGDKKPAKSGEAKT). Low complexity predominate over residues 272 to 281 (KAAGTTGSAA). A compositionally biased stretch (basic residues) spans 287-297 (SKKKKGGKKKK). Residues 433–603 (IRPPVVTIMG…LMEAEIRELK (171 aa)) enclose the tr-type G domain. The interval 442 to 449 (GHVDHGKT) is G1. A GTP-binding site is contributed by 442-449 (GHVDHGKT). Positions 467–471 (GITQH) are G2. The tract at residues 489–492 (DTPG) is G3. GTP contacts are provided by residues 489 to 493 (DTPGH) and 543 to 546 (NKID). A G4 region spans residues 543 to 546 (NKID). The interval 579 to 581 (SAK) is G5.

It belongs to the TRAFAC class translation factor GTPase superfamily. Classic translation factor GTPase family. IF-2 subfamily.

The protein localises to the cytoplasm. In terms of biological role, one of the essential components for the initiation of protein synthesis. Protects formylmethionyl-tRNA from spontaneous hydrolysis and promotes its binding to the 30S ribosomal subunits. Also involved in the hydrolysis of GTP during the formation of the 70S ribosomal complex. This Prosthecochloris aestuarii (strain DSM 271 / SK 413) protein is Translation initiation factor IF-2.